The following is a 138-amino-acid chain: Basic phospholipase A2 RV-4 (138 aa).

A signal peptide spans 1–16 (MRTLWIVAVCLIGVEG). 7 cysteine pairs are disulfide-bonded: Cys42–Cys131, Cys44–Cys60, Cys59–Cys111, Cys65–Cys138, Cys66–Cys104, Cys73–Cys97, and Cys91–Cys102. The Ca(2+) site is built by Tyr43, Gly45, and Gly47. His63 is an active-site residue. Asp64 contributes to the Ca(2+) binding site. Asp105 is a catalytic residue.

This sequence belongs to the phospholipase A2 family. Group II subfamily. D49 sub-subfamily. In terms of assembly, heterodimer of a weakly toxic basic protein having phospholipase A2 activity (RV-4) and a non-toxic acidic protein which inhibits its enzymatic activity but potentiates its lethal potency and neurotoxicity (RV-7). Ca(2+) serves as cofactor. Expressed by the venom gland.

The protein localises to the secreted. The catalysed reaction is a 1,2-diacyl-sn-glycero-3-phosphocholine + H2O = a 1-acyl-sn-glycero-3-phosphocholine + a fatty acid + H(+). Heterodimer RV-4/RV-7: acts as a presynaptic neurotoxin. Functionally, monomer: snake venom phospholipase A2 (PLA2) that acts as a presynaptic neurotoxin. PLA2 catalyzes the calcium-dependent hydrolysis of the 2-acyl groups in 3-sn-phosphoglycerides. The polypeptide is Basic phospholipase A2 RV-4 (Daboia siamensis (Eastern Russel's viper)).